A 228-amino-acid chain; its full sequence is MQKLKQQVFEANMELPRYGLVTFTWGNVSAIDRERGLVVIKPSGVAYETMKADDMVVVDMSGNVVEGEYRPSSDTATHLELYRRYPSLGGIVHTHSTHATAWAQAGLAIPALGTTHADYFFGDIPCTRGLSKEEVQGEYELNTGKVIIETLGDAEPLHTPGIVVYQHGPFAWGKDAHDAVHNAVVMEEVAKMAWIARSINPQLNHIDSFLMNKHFMRKHGPNAYYGQK.

Substrate is bound by residues 26–27 (GN), 43–44 (SG), and 72–73 (SS). Zn(2+) is bound by residues D74, H93, and H95. D118 functions as the Proton donor/acceptor in the catalytic mechanism. H167 lines the Zn(2+) pocket. Y225 functions as the Proton donor/acceptor in the catalytic mechanism.

Belongs to the aldolase class II family. AraD/FucA subfamily. Zn(2+) is required as a cofactor.

It carries out the reaction L-ribulose 5-phosphate = D-xylulose 5-phosphate. Its pathway is cofactor degradation; L-ascorbate degradation; D-xylulose 5-phosphate from L-ascorbate: step 4/4. Its function is as follows. Catalyzes the isomerization of L-ribulose 5-phosphate to D-xylulose 5-phosphate. Is involved in the anaerobic L-ascorbate utilization. This chain is L-ribulose-5-phosphate 4-epimerase UlaF, found in Escherichia coli O45:K1 (strain S88 / ExPEC).